Consider the following 440-residue polypeptide: uncharacterized protein (440 aa).

10 helical membrane-spanning segments follow: residues 26–46 (NGLIWCWWLFVISLVLASSTF), 59–79 (FVFWILALIFGVAVAFINGVL), 96–116 (FFLGFFFPQMAFCNALWLKLK), 138–158 (LTLSVFVVWGIYCVLATSIYL), 211–231 (FLVFFIIPTITLITLGCYLFA), 241–261 (LRKPLSTLSIVIMLTDVVGII), 263–283 (WIIIDILLIWLNVPFVIFVIF), 284–304 (WVIKLVLPLAMIGTFVSSLTI), 394–414 (FLIIFFSIISLILATIGSVFI), and 418–438 (IVQISIPFYVIGGVIWFFTFI).

It to M.pneumoniae MPN_087.

The protein resides in the cell membrane. This is an uncharacterized protein from Mycoplasma pneumoniae (strain ATCC 29342 / M129 / Subtype 1) (Mycoplasmoides pneumoniae).